A 444-amino-acid chain; its full sequence is MVKTEICGKGSSQGSEEERLSQLPDHLICVILSHLSTKDAVRTSILSTRWRNLWQLVPVLDFDSRELRSFSEFVSFAGSFFYLHKDSYIQKLRVCIYDLAGNYYLTSWIDLVTRHRIQHIDISVFTCSGFGVIPLSLYTCDTLVHLKLSRVTMVNVEFVSLPCLKILDLDFVNFTNETTLDKIISCSPVLEELTIVKSSEDNVKIIQVRSQTLKRVEIHRRFDRHNGLVIDTPLLQFLSIKAHSIKSIEFINLGFTTKVDIDVNLLDPNDLSNRSMTRDFFTTISRVRSLVIRHGTIKDIFHYMELEPLQQFCYLSELSAVCSISNLEMLLNLLKSCPKLESLSLKLVDYEKNKKEEVMSSTVPPPCLVSSLKFVKLESQLLGCGTELKVARYFLENSTILEKLTLKIDYMYKDEANVNHIRQTLHAVPRCSSTCEVVIHSLLY.

The F-box domain maps to 17-63; sequence EERLSQLPDHLICVILSHLSTKDAVRTSILSTRWRNLWQLVPVLDFD. LRR repeat units follow at residues 103–123, 124–150, 151–171, 172–197, 199–224, 226–252, 273–299, 300–321, 322–347, 369–396, and 398–423; these read YYLT…IDIS, VFTC…KLSR, VTMV…DLDF, VNFT…TIVK, SEDN…RFDR, NGLV…EFIN, NRSM…TIKD, IFHY…LSAV, CSIS…SLKL, VSSL…YFLE, and STIL…HIRQ. Residues 356–408 form the FBD domain; it reads EEVMSSTVPPPCLVSSLKFVKLESQLLGCGTELKVARYFLENSTILEKLTLKI.

The sequence is that of F-box/FBD/LRR-repeat protein At5g53840 from Arabidopsis thaliana (Mouse-ear cress).